The following is a 193-amino-acid chain: Peptidyl-tRNA hydrolase (193 aa).

Position 14 (Tyr14) interacts with tRNA. The active-site Proton acceptor is the His19. 3 residues coordinate tRNA: Phe64, Asn66, and Asn112.

Belongs to the PTH family. Monomer.

The protein resides in the cytoplasm. The catalysed reaction is an N-acyl-L-alpha-aminoacyl-tRNA + H2O = an N-acyl-L-amino acid + a tRNA + H(+). In terms of biological role, hydrolyzes ribosome-free peptidyl-tRNAs (with 1 or more amino acids incorporated), which drop off the ribosome during protein synthesis, or as a result of ribosome stalling. Its function is as follows. Catalyzes the release of premature peptidyl moieties from peptidyl-tRNA molecules trapped in stalled 50S ribosomal subunits, and thus maintains levels of free tRNAs and 50S ribosomes. This chain is Peptidyl-tRNA hydrolase, found in Bartonella bacilliformis (strain ATCC 35685 / KC583 / Herrer 020/F12,63).